Reading from the N-terminus, the 278-residue chain is Probable endonuclease 4 (278 aa).

9 residues coordinate Zn(2+): histidine 69, histidine 109, glutamate 145, aspartate 179, histidine 182, histidine 214, aspartate 227, histidine 229, and glutamate 259.

The protein belongs to the AP endonuclease 2 family. The cofactor is Zn(2+).

The enzyme catalyses Endonucleolytic cleavage to 5'-phosphooligonucleotide end-products.. Its function is as follows. Endonuclease IV plays a role in DNA repair. It cleaves phosphodiester bonds at apurinic or apyrimidinic (AP) sites, generating a 3'-hydroxyl group and a 5'-terminal sugar phosphate. This is Probable endonuclease 4 from Bacteroides fragilis (strain ATCC 25285 / DSM 2151 / CCUG 4856 / JCM 11019 / LMG 10263 / NCTC 9343 / Onslow / VPI 2553 / EN-2).